Here is a 495-residue protein sequence, read N- to C-terminus: Transcription termination/antitermination protein NusA (495 aa).

Positions 135 to 200 (GEIITGVVKK…RGAQLFVTRS (66 aa)) constitute an S1 motif domain. The KH domain occupies 302–368 (KHTMDIAVEA…FTKYLDIDED (67 aa)). Tandem repeats lie at residues 364 to 414 (DIDE…KNAL) and 439 to 489 (GVDR…RNIC). The tract at residues 364 to 489 (DIDEDFATVL…ALIMAARNIC (126 aa)) is 2 X 51 AA approximate repeats.

The protein belongs to the NusA family. Monomer. Binds directly to the core enzyme of the DNA-dependent RNA polymerase and to nascent RNA.

The protein localises to the cytoplasm. In terms of biological role, participates in both transcription termination and antitermination. The protein is Transcription termination/antitermination protein NusA of Shigella flexneri.